Reading from the N-terminus, the 389-residue chain is Phospho-N-acetylmuramoyl-pentapeptide-transferase (389 aa).

A run of 10 helical transmembrane segments spans residues 25–45, 73–93, 97–117, 135–155, 190–210, 222–242, 258–278, 286–306, 311–331, and 366–386; these read RAVMATITALGIGLVCGPWVI, TMGGVLILIGIAVATLLWGDL, FIWIVMLVTFGFGVIGWVDDY, FWQSVIGLFAAVYLAFSVSEA, ISYPLGVWGFIVLTYFVIVGA, GLVIMPVVLVGASLGVFAYVM, GAGELLIFCSAMGGAGLAFLW, VFMGDVGALALGGALGTVAVI, IVLFIMGGIFVAETLSVMLQV, and QVVVRFWIITLMLCLFGLTTL.

This sequence belongs to the glycosyltransferase 4 family. MraY subfamily. Mg(2+) serves as cofactor.

The protein localises to the cell inner membrane. The enzyme catalyses UDP-N-acetyl-alpha-D-muramoyl-L-alanyl-gamma-D-glutamyl-meso-2,6-diaminopimeloyl-D-alanyl-D-alanine + di-trans,octa-cis-undecaprenyl phosphate = di-trans,octa-cis-undecaprenyl diphospho-N-acetyl-alpha-D-muramoyl-L-alanyl-D-glutamyl-meso-2,6-diaminopimeloyl-D-alanyl-D-alanine + UMP. Its pathway is cell wall biogenesis; peptidoglycan biosynthesis. Functionally, catalyzes the initial step of the lipid cycle reactions in the biosynthesis of the cell wall peptidoglycan: transfers peptidoglycan precursor phospho-MurNAc-pentapeptide from UDP-MurNAc-pentapeptide onto the lipid carrier undecaprenyl phosphate, yielding undecaprenyl-pyrophosphoryl-MurNAc-pentapeptide, known as lipid I. The protein is Phospho-N-acetylmuramoyl-pentapeptide-transferase of Burkholderia cenocepacia (strain HI2424).